Consider the following 260-residue polypeptide: Small ribosomal subunit protein cS22 (260 aa).

The transit peptide at 1–62 (MATISSILPC…TNPPLLKVRA (62 aa)) directs the protein to the chloroplast. Residues 63–78 (VVTEETSSSSTASSSS) show a composition bias toward low complexity. The tract at residues 63-83 (VVTEETSSSSTASSSSDGEGA) is disordered. RRM domains follow at residues 84–162 (RRLY…ITEK) and 184–260 (YKVY…VNKA).

In terms of assembly, component of the chloroplast small ribosomal subunit (SSU). Mature 70S chloroplast ribosomes of higher plants consist of a small (30S) and a large (50S) subunit. The 30S small subunit contains 1 molecule of ribosomal RNA (16S rRNA) and 24 different proteins. The 50S large subunit contains 3 rRNA molecules (23S, 5S and 4.5S rRNA) and 33 different proteins.

It localises to the plastid. Its subcellular location is the chloroplast. Functionally, component of the chloroplast ribosome (chloro-ribosome), a dedicated translation machinery responsible for the synthesis of chloroplast genome-encoded proteins, including proteins of the transcription and translation machinery and components of the photosynthetic apparatus. cS22 may have a role in the recruitment of stored chloroplast mRNAs for active protein synthesis. The chain is Small ribosomal subunit protein cS22 (PSRP2) from Spinacia oleracea (Spinach).